The sequence spans 154 residues: RING finger protein 11 (154 aa).

A compositionally biased stretch (polar residues) spans 1-12 (MGNCLKSPTSDD). Residues 1–52 (MGNCLKSPTSDDISLLHESQSDRASFGEGTEPDQEPPPPYQEQVPVPIYHPT) form a disordered region. G2 carries N-myristoyl glycine lipidation. C4 is lipidated: S-palmitoyl cysteine. Residues S14 and S25 each carry the phosphoserine modification. Positions 37-40 (PPPY) match the PPxY motif motif. Residues 99–140 (CVICMMDFVYGDPIRFLPCMHIYHLDCIDDWLMRSFTCPSCM) form an RING-type zinc finger. Phosphothreonine; by PKB/AKT1 is present on T135.

In terms of assembly, interacts (when phosphorylated) with 14-3-3. Interacts with the E3 ubiquitin-ligases NEDD4, ITCH, SMURF2 and WWP1. Also interacts with the E2 ubiquitin-conjugating enzymes UBE2D1 and UBE2N, but neither with CDC34, nor with UBE2L3. Interacts with ZNF350, EPS15 and STAMBP. After TNF stimulation, interacts with TAX1BP1, TNFAIP3 and RIPK1; these interactions are transient and they are lost after 1 hour of stimulation with TNF. Interacts with GGA1. Post-translationally, ubiquitinated in the presence of ITCH, SMURF2 and UBE2D1, as well as WWP1. In terms of processing, phosphorylation by PKB/AKT1 may accelerate degradation by the proteasome. Acylation at both Gly-2 and Cys-4 is required for proper localization to the endosomes.

It localises to the early endosome. The protein localises to the recycling endosome. Its subcellular location is the cytoplasm. It is found in the nucleus. Its function is as follows. Essential component of a ubiquitin-editing protein complex, comprising also TNFAIP3, ITCH and TAX1BP1, that ensures the transient nature of inflammatory signaling pathways. Promotes the association of TNFAIP3 to RIPK1 after TNF stimulation. TNFAIP3 deubiquitinates 'Lys-63' polyubiquitin chains on RIPK1 and catalyzes the formation of 'Lys-48'-polyubiquitin chains. This leads to RIPK1 proteasomal degradation and consequently termination of the TNF- or LPS-mediated activation of NF-kappa-B. Recruits STAMBP to the E3 ubiquitin-ligase SMURF2 for ubiquitination, leading to its degradation by the 26S proteasome. The chain is RING finger protein 11 (Rnf11) from Mus musculus (Mouse).